Here is a 326-residue protein sequence, read N- to C-terminus: Probable cell division protein WhiA (326 aa).

The H-T-H motif DNA-binding region spans 275-308; that stretch reads SLEELGALADPPLTKDAIAGRIRRLLALADKRAR.

Belongs to the WhiA family.

Functionally, involved in cell division and chromosome segregation. This is Probable cell division protein WhiA from Salinispora arenicola (strain CNS-205).